A 95-amino-acid polypeptide reads, in one-letter code: Mitochondrial import inner membrane translocase subunit Tim13 (95 aa).

Position 1 is an N-acetylmethionine (methionine 1). The residue at position 7 (serine 7) is a Phosphoserine. The Twin CX3C motif signature appears at 46–69 (CFRKCIGKPGGSLDNSEQKCIAMC). 2 disulfides stabilise this stretch: cysteine 46–cysteine 69 and cysteine 50–cysteine 65. Lysine 53 carries the post-translational modification N6-succinyllysine.

Belongs to the small Tim family. As to quaternary structure, heterohexamer; composed of 3 copies of TIMM8 (TIMM8A or TIMM8B) and 3 copies of TIMM13, named soluble 70 kDa complex. Associates with the TIM22 complex, whose core is composed of TIMM22. As to expression, ubiquitous, with highest expression in heart, kidney, liver and skeletal muscle.

Its subcellular location is the mitochondrion inner membrane. Mitochondrial intermembrane chaperone that participates in the import and insertion of some multi-pass transmembrane proteins into the mitochondrial inner membrane. Also required for the transfer of beta-barrel precursors from the TOM complex to the sorting and assembly machinery (SAM complex) of the outer membrane. Acts as a chaperone-like protein that protects the hydrophobic precursors from aggregation and guide them through the mitochondrial intermembrane space. The TIMM8-TIMM13 complex mediates the import of proteins such as TIMM23, SLC25A12/ARALAR1 and SLC25A13/ARALAR2, while the predominant TIMM9-TIMM10 70 kDa complex mediates the import of much more proteins. In Homo sapiens (Human), this protein is Mitochondrial import inner membrane translocase subunit Tim13 (TIMM13).